A 258-amino-acid polypeptide reads, in one-letter code: Phycoerythrobilin:ferredoxin oxidoreductase (258 aa).

The protein belongs to the HY2 family.

The catalysed reaction is (3Z)-phycoerythrobilin + oxidized 2[4Fe-4S]-[ferredoxin] = 15,16-dihydrobiliverdin + reduced 2[4Fe-4S]-[ferredoxin] + 2 H(+). Catalyzes the two-electron reduction of the C2 and C3(1) diene system of 15,16-dihydrobiliverdin. The sequence is that of Phycoerythrobilin:ferredoxin oxidoreductase from Prochlorococcus marinus (strain NATL2A).